The sequence spans 563 residues: Developmental regulatory protein wetA (563 aa).

2 stretches are compositionally biased toward polar residues: residues glutamate 54–serine 69 and histidine 160–glutamine 175. 6 disordered regions span residues glutamate 54–proline 81, alanine 112–lysine 176, serine 272–glutamine 318, proline 334–threonine 356, proline 430–glycine 494, and glycine 516–arginine 538. Residues serine 272–aspartate 305 are compositionally biased toward low complexity. Over residues proline 430–leucine 441 the composition is skewed to polar residues.

It belongs to the wetA family.

In terms of biological role, brlA, abaA and wetA are pivotal regulators of conidiophore development and conidium maturation. They act individually and together to regulate their own expression and that of numerous other sporulation-specific genes. In Aspergillus oryzae (strain ATCC 42149 / RIB 40) (Yellow koji mold), this protein is Developmental regulatory protein wetA.